A 312-amino-acid chain; its full sequence is Acetyl-coenzyme A carboxylase carboxyl transferase subunit alpha (312 aa).

The CoA carboxyltransferase C-terminal domain maps to 36–286 (NLEKEISKTY…ADYVKKSLNE (251 aa)).

Belongs to the AccA family. As to quaternary structure, acetyl-CoA carboxylase is a heterohexamer composed of biotin carboxyl carrier protein (AccB), biotin carboxylase (AccC) and two subunits each of ACCase subunit alpha (AccA) and ACCase subunit beta (AccD).

The protein localises to the cytoplasm. It catalyses the reaction N(6)-carboxybiotinyl-L-lysyl-[protein] + acetyl-CoA = N(6)-biotinyl-L-lysyl-[protein] + malonyl-CoA. Its pathway is lipid metabolism; malonyl-CoA biosynthesis; malonyl-CoA from acetyl-CoA: step 1/1. Functionally, component of the acetyl coenzyme A carboxylase (ACC) complex. First, biotin carboxylase catalyzes the carboxylation of biotin on its carrier protein (BCCP) and then the CO(2) group is transferred by the carboxyltransferase to acetyl-CoA to form malonyl-CoA. The protein is Acetyl-coenzyme A carboxylase carboxyl transferase subunit alpha of Campylobacter jejuni subsp. jejuni serotype O:23/36 (strain 81-176).